A 599-amino-acid chain; its full sequence is Tail knob protein gp9 (599 aa).

In terms of assembly, homohexamer; forms a hexameric tube structure with six flexible hydrophobic loops.

The protein localises to the virion. Distal (knob) tail protein that plugs the end of the tube before DNA ejection and forms a channel perforating the host membrane during ejection. This Bacillus subtilis (Bacteriophage phi-29) protein is Tail knob protein gp9.